Consider the following 211-residue polypeptide: B3 domain-containing protein At5g42700 (211 aa).

The TF-B3 DNA-binding region spans 110 to 201; the sequence is FVKSMLQSHV…AFKVYITRVG (92 aa).

Its subcellular location is the nucleus. The protein is B3 domain-containing protein At5g42700 of Arabidopsis thaliana (Mouse-ear cress).